We begin with the raw amino-acid sequence, 896 residues long: Serine/threonine-protein kinase TAO3 (896 aa).

The region spanning 24 to 277 (FVDLHEIGHG…SLELLRHDFV (254 aa)) is the Protein kinase domain. ATP-binding positions include 30-38 (IGHGSFGAV) and lysine 53. The active-site Proton acceptor is aspartate 147. 2 disordered regions span residues 316 to 366 (SRNG…SVNS) and 403 to 423 (DEAD…VQSQ). Residues 334 to 348 (GTSLTRKMDSLGSNH) show a composition bias toward polar residues. The span at 349 to 366 (SIPSTSVSTGSQSSSVNS) shows a compositional bias: low complexity. The segment covering 403–414 (DEADHRDPRPEL) has biased composition (basic and acidic residues). Coiled coils occupy residues 450 to 513 (EQEN…SKRQ), 545 to 650 (SFLE…LIRQ), and 752 to 873 (LKSL…IETF). Over residues 565–587 (LNEDHSTPKKEKQERISKHKENL) the composition is skewed to basic and acidic residues. Residues 565–593 (LNEDHSTPKKEKQERISKHKENLQHTQAE) are disordered.

This sequence belongs to the protein kinase superfamily. STE Ser/Thr protein kinase family. STE20 subfamily.

It is found in the cytoplasm. The protein localises to the cell membrane. Its subcellular location is the membrane raft. The protein resides in the lipid droplet. It catalyses the reaction L-seryl-[protein] + ATP = O-phospho-L-seryl-[protein] + ADP + H(+). The catalysed reaction is L-threonyl-[protein] + ATP = O-phospho-L-threonyl-[protein] + ADP + H(+). Its function is as follows. Serine/threonine-protein kinase that acts as a regulator of the p38/MAPK14 stress-activated MAPK cascade and of the MAPK8/JNK cascade. In response to DNA damage, involved in the G2/M transition DNA damage checkpoint by activating the p38/MAPK14 stress-activated MAPK cascade, probably by mediating phosphorylation of upstream MAP kinase kinases. Inhibits basal activity of the MAPK8/JNK cascade. The polypeptide is Serine/threonine-protein kinase TAO3 (taok3) (Xenopus laevis (African clawed frog)).